The chain runs to 560 residues: Arginine--tRNA ligase (560 aa).

Residues Phe164–Asp174 carry the 'HIGH' region motif.

The protein belongs to the class-I aminoacyl-tRNA synthetase family. As to quaternary structure, monomer.

Its subcellular location is the cytoplasm. It carries out the reaction tRNA(Arg) + L-arginine + ATP = L-arginyl-tRNA(Arg) + AMP + diphosphate. The sequence is that of Arginine--tRNA ligase from Bordetella pertussis (strain Tohama I / ATCC BAA-589 / NCTC 13251).